Reading from the N-terminus, the 103-residue chain is Flagellar hook-basal body complex protein FliE (103 aa).

The protein belongs to the FliE family.

The protein resides in the bacterial flagellum basal body. This chain is Flagellar hook-basal body complex protein FliE, found in Photorhabdus laumondii subsp. laumondii (strain DSM 15139 / CIP 105565 / TT01) (Photorhabdus luminescens subsp. laumondii).